Here is a 460-residue protein sequence, read N- to C-terminus: Argininosuccinate lyase (460 aa).

Belongs to the lyase 1 family. Argininosuccinate lyase subfamily.

It localises to the cytoplasm. It carries out the reaction 2-(N(omega)-L-arginino)succinate = fumarate + L-arginine. Its pathway is amino-acid biosynthesis; L-arginine biosynthesis; L-arginine from L-ornithine and carbamoyl phosphate: step 3/3. This is Argininosuccinate lyase from Limosilactobacillus fermentum (strain NBRC 3956 / LMG 18251) (Lactobacillus fermentum).